The primary structure comprises 213 residues: Urease accessory protein UreE (213 aa).

Positions 170–213 (EHHGHSHSHSHSHSHDHDHDHDHDHDHDHQHGPSCSHGHHHGHR) are disordered. The segment covering 182 to 200 (HSHDHDHDHDHDHDHDHQH) has biased composition (basic and acidic residues).

Belongs to the UreE family.

It is found in the cytoplasm. Involved in urease metallocenter assembly. Binds nickel. Probably functions as a nickel donor during metallocenter assembly. The polypeptide is Urease accessory protein UreE (Burkholderia mallei (strain NCTC 10229)).